The sequence spans 153 residues: 6,7-dimethyl-8-ribityllumazine synthase 1 (153 aa).

5-amino-6-(D-ribitylamino)uracil-binding positions include F16, A47 to E49, and M76 to I78. E81–T82 is a binding site for (2S)-2-hydroxy-3-oxobutyl phosphate. H84 (proton donor) is an active-site residue. N109 provides a ligand contact to 5-amino-6-(D-ribitylamino)uracil. R123 contributes to the (2S)-2-hydroxy-3-oxobutyl phosphate binding site.

Belongs to the DMRL synthase family.

The enzyme catalyses (2S)-2-hydroxy-3-oxobutyl phosphate + 5-amino-6-(D-ribitylamino)uracil = 6,7-dimethyl-8-(1-D-ribityl)lumazine + phosphate + 2 H2O + H(+). Its pathway is cofactor biosynthesis; riboflavin biosynthesis; riboflavin from 2-hydroxy-3-oxobutyl phosphate and 5-amino-6-(D-ribitylamino)uracil: step 1/2. Its function is as follows. Catalyzes the formation of 6,7-dimethyl-8-ribityllumazine by condensation of 5-amino-6-(D-ribitylamino)uracil with 3,4-dihydroxy-2-butanone 4-phosphate. This is the penultimate step in the biosynthesis of riboflavin. The polypeptide is 6,7-dimethyl-8-ribityllumazine synthase 1 (Rhizobium meliloti (strain 1021) (Ensifer meliloti)).